Here is a 368-residue protein sequence, read N- to C-terminus: Phosphoribosylformylglycinamidine cyclo-ligase (368 aa).

This sequence belongs to the AIR synthase family.

It is found in the cytoplasm. The catalysed reaction is 2-formamido-N(1)-(5-O-phospho-beta-D-ribosyl)acetamidine + ATP = 5-amino-1-(5-phospho-beta-D-ribosyl)imidazole + ADP + phosphate + H(+). Its pathway is purine metabolism; IMP biosynthesis via de novo pathway; 5-amino-1-(5-phospho-D-ribosyl)imidazole from N(2)-formyl-N(1)-(5-phospho-D-ribosyl)glycinamide: step 2/2. The polypeptide is Phosphoribosylformylglycinamidine cyclo-ligase (Chelativorans sp. (strain BNC1)).